Here is a 429-residue protein sequence, read N- to C-terminus: MALRVTRNTKLNTENKAKVSMAGAKAVPVTLAAASKPGLRPRTALGDIGNKVSEQAQARLPLKKELKTSVTGKVSAKIPPPKPLEKVPPVSEPEVELAETHEPEPVMDEKLSPEPILVDNPSPSPMETSGCAPAEEYLCQAFSDVILAVSDVDADDGADPNLCSEYVKDIYAYLRQLEEEQSVRPKYLLGREVTGNMRAILIDWLIQVQMKFRLLQETMYMTVSIIDRFMQDNCVPKKMLQLVGVTAMFIASKYEEMYPPEIGDFAFVTNNTYTKHQIRQMEMKILRVLNFSLGRPLPLHFLRRTSKIGEVDVEQHTLAKYLMELTLLDYDMVDFAPSQIAAGAFCLALKILDNGEWTPTLQHYLSYTEESLLPVMQHLAKNVVMVNHGLTKHMTIKNKYATSKHAKISTLAQLNCTLVQNLSKAVAKA.

The tract at residues 71–114 (TGKVSAKIPPPKPLEKVPPVSEPEVELAETHEPEPVMDEKLSPE) is disordered. N6-acetyllysine is present on Lys-73. Residues 98-112 (AETHEPEPVMDEKLS) are compositionally biased toward basic and acidic residues. At Ser-122 the chain carries Phosphoserine; by CDK1. Position 124 is a phosphoserine (Ser-124). Ser-129 bears the Phosphoserine; by PLK1 mark. Ser-143 bears the Phosphoserine mark. Interaction with CDK2 regions lie at residues 165–173 (EYVKDIYAY) and 254–257 (YEEM). Thr-317 is modified (phosphothreonine).

It belongs to the cyclin family. Cyclin AB subfamily. As to quaternary structure, interacts with the CDC2 protein kinase to form a serine/threonine kinase holoenzyme complex also known as maturation promoting factor (MPF). The cyclin subunit imparts substrate specificity to the complex. Binds HEI10. Interacts with catalytically active RALBP1 and CDC2 during mitosis to form an endocytotic complex during interphase. Interacts with CCNF; interaction is required for nuclear localization. Interacts with CDK5RAP3. Interacts with RFPL4A and UBE2A. Interacts with INCA1. Ubiquitinated by the SCF(NIPA) complex during interphase, leading to its destruction. Not ubiquitinated during G2/M phases. In terms of processing, phosphorylated by PLK1 at Ser-129 on centrosomes during prophase: phosphorylation by PLK1 does not cause nuclear import. Phosphorylation at Ser-143 was also reported to be mediated by PLK1 but Ser-129 seems to be the primary phosphorylation site.

The protein resides in the cytoplasm. Its subcellular location is the nucleus. The protein localises to the cytoskeleton. It is found in the microtubule organizing center. It localises to the centrosome. Essential for the control of the cell cycle at the G2/M (mitosis) transition. This Mesocricetus auratus (Golden hamster) protein is G2/mitotic-specific cyclin-B1 (CCNB1).